The primary structure comprises 143 residues: Transcriptional regulator MraZ (143 aa).

SpoVT-AbrB domains lie at 5 to 47 (EYQH…PMHE) and 76 to 119 (ATEC…SKVI).

This sequence belongs to the MraZ family. In terms of assembly, forms oligomers.

Its subcellular location is the cytoplasm. The protein localises to the nucleoid. The polypeptide is Transcriptional regulator MraZ (Bacillus subtilis (strain 168)).